Here is a 256-residue protein sequence, read N- to C-terminus: Small ribosomal subunit protein eS1 (256 aa).

Residues 1–18 (MAVGKNKRLSKGKKGIKK) are compositionally biased toward basic residues. Positions 1–20 (MAVGKNKRLSKGKKGIKKRT) are disordered. At A2 the chain carries N-acetylalanine; partial.

It belongs to the eukaryotic ribosomal protein eS1 family. Component of the small ribosomal subunit. Mature ribosomes consist of a small (40S) and a large (60S) subunit. The 40S subunit contains about 33 different proteins and 1 molecule of RNA (18S). The 60S subunit contains about 49 different proteins and 3 molecules of RNA (25S, 5.8S and 5S).

It localises to the cytoplasm. The polypeptide is Small ribosomal subunit protein eS1 (rps1) (Aspergillus flavus (strain ATCC 200026 / FGSC A1120 / IAM 13836 / NRRL 3357 / JCM 12722 / SRRC 167)).